Consider the following 210-residue polypeptide: Histidine biosynthesis bifunctional protein HisIE (210 aa).

A phosphoribosyl-AMP cyclohydrolase region spans residues 1–106 (MTKYKIDFSK…SCFNTEVPFS (106 aa)). Residues 107 to 210 (VQTLAQTVQD…KGERQNIEQW (104 aa)) are phosphoribosyl-ATP pyrophosphohydrolase.

In the N-terminal section; belongs to the PRA-CH family. The protein in the C-terminal section; belongs to the PRA-PH family.

It is found in the cytoplasm. The catalysed reaction is 1-(5-phospho-beta-D-ribosyl)-ATP + H2O = 1-(5-phospho-beta-D-ribosyl)-5'-AMP + diphosphate + H(+). The enzyme catalyses 1-(5-phospho-beta-D-ribosyl)-5'-AMP + H2O = 1-(5-phospho-beta-D-ribosyl)-5-[(5-phospho-beta-D-ribosylamino)methylideneamino]imidazole-4-carboxamide. It functions in the pathway amino-acid biosynthesis; L-histidine biosynthesis; L-histidine from 5-phospho-alpha-D-ribose 1-diphosphate: step 2/9. Its pathway is amino-acid biosynthesis; L-histidine biosynthesis; L-histidine from 5-phospho-alpha-D-ribose 1-diphosphate: step 3/9. This Staphylococcus aureus (strain Mu50 / ATCC 700699) protein is Histidine biosynthesis bifunctional protein HisIE (hisI).